The chain runs to 345 residues: L-threonine 3-dehydrogenase (345 aa).

Residue cysteine 42 participates in Zn(2+) binding. Catalysis depends on charge relay system residues threonine 44 and histidine 47. Zn(2+)-binding residues include histidine 67, glutamate 68, cysteine 97, cysteine 100, cysteine 103, and cysteine 111. NAD(+) is bound by residues isoleucine 179, aspartate 199, arginine 204, 266-268 (LGI), and 290-291 (IY).

This sequence belongs to the zinc-containing alcohol dehydrogenase family. Homotetramer. It depends on Zn(2+) as a cofactor.

It is found in the cytoplasm. The catalysed reaction is L-threonine + NAD(+) = (2S)-2-amino-3-oxobutanoate + NADH + H(+). It participates in amino-acid degradation; L-threonine degradation via oxydo-reductase pathway; glycine from L-threonine: step 1/2. Catalyzes the NAD(+)-dependent oxidation of L-threonine to 2-amino-3-ketobutyrate. The polypeptide is L-threonine 3-dehydrogenase (Rhizobium johnstonii (strain DSM 114642 / LMG 32736 / 3841) (Rhizobium leguminosarum bv. viciae)).